The chain runs to 366 residues: G-protein coupled receptor 183-B (366 aa).

The Extracellular portion of the chain corresponds to 1–24; that stretch reads MMSPDLDLNFSSNCNLYDHRPVAR. A glycan (N-linked (GlcNAc...) asparagine) is linked at Asn9. The chain crosses the membrane as a helical span at residues 25–50; sequence VLIPLVYSIICPVGLLGNALALHVVI. At 51-70 the chain is on the cytoplasmic side; that stretch reads SSTTKINSITLYSANLAVSD. Residues 71 to 88 form a helical membrane-spanning segment; the sequence is ILFCLSLPLRAVYYGLGF. At 89-98 the chain is on the extracellular side; it reads HWPMGEVLCK. A disulfide bond links Cys97 and Cys175. The chain crosses the membrane as a helical span at residues 99–120; that stretch reads AIALLFYLNCYAGVNFMTCLAV. The Cytoplasmic portion of the chain corresponds to 121 to 142; sequence DRFVALVFPARLAKLRKAKNVR. A helical membrane pass occupies residues 143 to 161; that stretch reads FVCLAIWLLVLAQTLPLLT. The Extracellular segment spans residues 162–187; sequence IGLTKTEPDSSITCMEYPNFEGVFKG. A helical transmembrane segment spans residues 188 to 210; the sequence is LPYMLIVAVVLGFGIPVMTIIAC. Residues 211–236 lie on the Cytoplasmic side of the membrane; it reads YSILTHKLHQAAKSNQLTERSGKTKK. The helical transmembrane segment at 237-260 threads the bilayer; it reads ARGVIAGVVFVFVVCFSPYHIDIL. Topologically, residues 261–280 are extracellular; the sequence is QYMIRKLLYETDCKELQSFQ. The helical transmembrane segment at 281-305 threads the bilayer; it reads ISLHITVCLMNLNSCLDPFVYFFAC. Residues 306-366 are Cytoplasmic-facing; that stretch reads KGYKQKVMRM…QQICYQPSAT (61 aa).

The protein belongs to the G-protein coupled receptor 1 family.

Its subcellular location is the cell membrane. In terms of biological role, probable receptor for oxysterols that plays a central role during humoral immunity. Promotes activated B-cell localization in the outer follicle and interfollicular regions. This Danio rerio (Zebrafish) protein is G-protein coupled receptor 183-B (gpr183b).